A 454-amino-acid polypeptide reads, in one-letter code: Na(+)/H(+) antiporter NhaA (454 aa).

The next 10 helical transmembrane spans lie at 22-42, 64-84, 106-126, 150-170, 190-210, 228-248, 284-304, 306-326, 355-375, and 386-406; these read ISGL…NLPF, MGLG…TVGL, LCAV…ISLF, GWAV…ALFA, LLAI…YWFL, VPWL…FEAG, PFSA…VHFE, LTLA…LVVG, MFPA…IASL, and ARFG…ILLS.

This sequence belongs to the NhaA Na(+)/H(+) (TC 2.A.33) antiporter family.

Its subcellular location is the cell membrane. The catalysed reaction is Na(+)(in) + 2 H(+)(out) = Na(+)(out) + 2 H(+)(in). Functionally, na(+)/H(+) antiporter that extrudes sodium in exchange for external protons. In Bifidobacterium adolescentis (strain ATCC 15703 / DSM 20083 / NCTC 11814 / E194a), this protein is Na(+)/H(+) antiporter NhaA.